We begin with the raw amino-acid sequence, 150 residues long: UPF0208 membrane protein VS_0999 (150 aa).

A run of 2 helical transmembrane segments spans residues 42–62 (FGVK…MVFN) and 70–90 (AVVM…WLGN).

The protein belongs to the UPF0208 family.

Its subcellular location is the cell inner membrane. The polypeptide is UPF0208 membrane protein VS_0999 (Vibrio atlanticus (strain LGP32) (Vibrio splendidus (strain Mel32))).